A 117-amino-acid chain; its full sequence is Large ribosomal subunit protein bL20 (117 aa).

The protein belongs to the bacterial ribosomal protein bL20 family.

Its function is as follows. Binds directly to 23S ribosomal RNA and is necessary for the in vitro assembly process of the 50S ribosomal subunit. It is not involved in the protein synthesizing functions of that subunit. In Campylobacter lari (strain RM2100 / D67 / ATCC BAA-1060), this protein is Large ribosomal subunit protein bL20.